A 352-amino-acid polypeptide reads, in one-letter code: Putative pectinesterase 11 (352 aa).

The helical transmembrane segment at 13–35 (ANYHHIIIINIFILSSITSSSMA) threads the bilayer. The N-linked (GlcNAc...) asparagine glycan is linked to Asn76. The active-site Proton donor is the Asp175. The Nucleophile role is filled by Asp196. Residue Asn218 is glycosylated (N-linked (GlcNAc...) asparagine). Arg252 and Trp254 together coordinate substrate. A disordered region spans residues 332 to 352 (LRPAPSHFKNAPKQTQNKEIN). Polar residues predominate over residues 343 to 352 (PKQTQNKEIN).

It belongs to the pectinesterase family.

It is found in the membrane. It carries out the reaction [(1-&gt;4)-alpha-D-galacturonosyl methyl ester](n) + n H2O = [(1-&gt;4)-alpha-D-galacturonosyl](n) + n methanol + n H(+). Its pathway is glycan metabolism; pectin degradation; 2-dehydro-3-deoxy-D-gluconate from pectin: step 1/5. Functionally, acts in the modification of cell walls via demethylesterification of cell wall pectin. The protein is Putative pectinesterase 11 (PME11) of Arabidopsis thaliana (Mouse-ear cress).